Consider the following 961-residue polypeptide: Transcription factor MYB3R-4 (961 aa).

Positions 1–33 are disordered; the sequence is MEAESSTPQERIPKLRHGRTSGPARRSTRGQWT. HTH myb-type domains lie at 24–75, 76–131, and 132–182; these read ARRS…QKVL, NPEL…NPAI, and NKEA…KKKL. DNA-binding regions (H-T-H motif) lie at residues 52–75, 104–127, and 155–178; these read WKKI…QKVL, WSTI…HNHL, and WAEL…HSSV. 2 disordered regions span residues 390–457 and 534–555; these read GHSV…LIIS and RPHS…EDMG. Composition is skewed to polar residues over residues 391–405 and 416–430; these read HSVS…NEFN and SSAS…TKSP. Residues 431-444 are compositionally biased toward low complexity; that stretch reads TQSSSSRFTATAAS. Over residues 534–554 the composition is skewed to basic and acidic residues; that stretch reads RPHSLPKHEPNMTNEQHHEDM. Residues 612–619 carry the Nuclear localization signal motif; sequence GKKTLVGA. A disordered region spans residues 756-781; the sequence is NTGKPVLSTPGQSVTKAEKAQVSTPR. Residues 764 to 781 show a composition bias toward polar residues; it reads TPGQSVTKAEKAQVSTPR.

As to quaternary structure, component of a DREAM-like complex which modulates a variety of developmentally regulated genes and of the mitotic genes in proliferating and differentiated cells. Associates with CDKA-1, RBR1 and E2FB, but not with E2FC, in proliferating cells, at early stages of leaves development. In terms of tissue distribution, expressed in roots, cotyledons and leaves, especially in vascular tissues, and in flowers.

It is found in the nucleus. Transcription factor that binds 5'-AACGG-3' motifs in gene promoters. Involved in the regulation of cytokinesis, probably via the activation of several G2/M phase-specific genes transcription (e.g. KNOLLE). Required for the maintenance of diploidy. Functionally, involved in transcription regulation during induced endoreduplication at the powdery mildew (e.g. G.orontii) infection site, thus promoting G.orontii growth and reproduction. The protein is Transcription factor MYB3R-4 of Arabidopsis thaliana (Mouse-ear cress).